A 366-amino-acid chain; its full sequence is G-protein coupled receptor 183 (366 aa).

Residues 1 to 37 are Extracellular-facing; it reads MQVMRTFNQPPTSSHPTPTLNDSDTCITLYNHRGYAR. N21 is a glycosylation site (N-linked (GlcNAc...) asparagine). Residues 38–63 form a helical membrane-spanning segment; that stretch reads VLMPLFYCIVFFVGLLGNALAFHIIR. Residues 64–83 lie on the Cytoplasmic side of the membrane; the sequence is PNVKKINSTTLYSANLVISD. The helical transmembrane segment at 84 to 101 threads the bilayer; sequence ILFTLSLPLRIIYYALGF. Residues 102-111 are Extracellular-facing; it reads HWPLGETLCK. Cysteines 110 and 188 form a disulfide. Residues 112-133 form a helical membrane-spanning segment; it reads IVGLIFYINTYAGVNFMTCLSV. The Cytoplasmic portion of the chain corresponds to 134-155; the sequence is DRFIAVVLPLRFARFRKVSNVR. The chain crosses the membrane as a helical span at residues 156–174; the sequence is YICVGVWLLVLMQTLPLLS. Residues 175-199 are Extracellular-facing; sequence MPMTNEEPDGFITCMEYPNFEPVPN. The helical transmembrane segment at 200-222 threads the bilayer; the sequence is ISYILIGAVFLGYGVPVVTILVC. At 223 to 248 the chain is on the cytoplasmic side; the sequence is YSILCCKLRLAAKANQLTDKSGRSQK. The helical transmembrane segment at 249–272 threads the bilayer; the sequence is AIGVICCVSLVFVVCFSPYHIDLL. The Extracellular portion of the chain corresponds to 273-292; it reads QYMIRKLIYTPDCAELTAFQ. The chain crosses the membrane as a helical span at residues 293-317; that stretch reads ISLHFTVCLMNLNSCLDPFIYFFAC. Topologically, residues 318-366 are cytoplasmic; that stretch reads KGYKTKVLKILKRQVSVSFSSAARTLPEGLSRDISDGNKIHLNSTRHKE.

Belongs to the G-protein coupled receptor 1 family.

It localises to the cell membrane. In terms of biological role, G-protein coupled receptor expressed in lymphocytes that acts as a chemotactic receptor for B-cells, T-cells, splenic dendritic cells, monocytes/macrophages and astrocytes. Receptor for oxysterol 7-alpha,25-dihydroxycholesterol (7-alpha,25-OHC) and other related oxysterols. Mediates cell positioning and movement of a number of cells by binding the 7-alpha,25-OHC ligand that forms a chemotactic gradient. Binding of 7-alpha,25-OHC mediates the correct localization of B-cells during humoral immune responses. The polypeptide is G-protein coupled receptor 183 (gpr183) (Salmo salar (Atlantic salmon)).